A 1085-amino-acid chain; its full sequence is Solute carrier family 12 member 4 (1085 aa).

Over 1–119 the chain is Cytoplasmic; the sequence is MPHFTVVPVD…RRAAKAPSMG (119 aa). S24, S47, S51, S81, and S88 each carry phosphoserine. The tract at residues 32–56 is disordered; it reads AEREDSDGQGNHRENSPFLSPLDAS. Residues 120–141 form a discontinuously helical membrane-spanning segment; the sequence is TLMGVYLPCLQNIFGVILFLRL. Residues N131 and I132 each coordinate K(+). Over 142 to 149 the chain is Extracellular; the sequence is TWMVGTAG. A helical membrane pass occupies residues 150-172; that stretch reads VLQALLIVLICCCCTLLTAISMS. Residues 173–196 lie on the Cytoplasmic side of the membrane; it reads AIATNGVVPAGGSYFMISRSLGPE. A helical membrane pass occupies residues 197–225; that stretch reads FGGAVGLCFYLGTTFAAAMYILGAIEILL. Y216 lines the K(+) pocket. Over 226-248 the chain is Extracellular; the sequence is TYIAPPAAIFYPSGTHDMSSATL. Helical transmembrane passes span 249-271 and 272-297; these read NNMR…VGVK and YVNK…GGIK. Over 298–419 the chain is Extracellular; the sequence is SAFDPPVFPV…LYVVADIATS (122 aa). The cysteines at positions 308 and 323 are disulfide-linked. N-linked (GlcNAc...) asparagine glycosylation is found at N312, N331, and N347. C343 and C353 are joined by a disulfide. A helical transmembrane segment spans residues 420–440; the sequence is FTVLVGIFFPSVTGIMAGSNR. Residues P429 and T432 each coordinate K(+). G433, I434, and M435 together coordinate chloride. At 441–450 the chain is on the cytoplasmic side; the sequence is SGDLRDAQKS. The chain crosses the membrane as a helical span at residues 451 to 473; the sequence is IPVGTILAIVTTSLVYFSSVILF. Residues 474 to 504 are Extracellular-facing; sequence GACIEGVVLRDKYGDGVSRNLVVGTLAWPSP. A helical transmembrane segment spans residues 505–531; it reads WVIVVGSFFSTCGAGLQSLTGAPRLLQ. At 532-554 the chain is on the cytoplasmic side; that stretch reads AIAKDNIIPFLRVFGHGKANGEP. Transmembrane regions (helical) follow at residues 555-575 and 576-598; these read TWAL…ASLD and MVAP…ACAV. Residue Y589 coordinates chloride. Over 599-612 the chain is Cytoplasmic; sequence QTLLRTPNWRPRFK. The next 2 helical transmembrane spans lie at 613–635 and 636–651; these read YYHW…VSSW and YYAL…IYKY. Residues 652–1085 are Cytoplasmic-facing; the sequence is IEYQGAEKEW…GGREVITIYS (434 aa). A scissor helix region spans residues 665–681; it reads IRGLSLSAARYALLRLE. 5 residues coordinate ATP: L697, K699, K707, Y708, and V730. S734 is subject to Phosphoserine. ATP is bound by residues G794, W795, and Y797. Phosphoserine occurs at positions 916 and 967. T983 bears the Phosphothreonine mark. A Phosphoserine modification is found at S1050.

This sequence belongs to the SLC12A transporter family. K/Cl co-transporter subfamily. As to quaternary structure, homodimer; adopts a domain-swap conformation at the scissor helices connecting the transmembrane domain and C-terminal domain. Heterodimer with other K-Cl cotransporters. Post-translationally, N-glycosylated. Phosphorylated, phosphorylation may regulate transporter activity. Ubiquitous.

The protein resides in the cell membrane. The catalysed reaction is K(+)(in) + chloride(in) = K(+)(out) + chloride(out). Inhibited by WNK3. Functionally, mediates electroneutral potassium-chloride cotransport when activated by cell swelling. May contribute to cell volume homeostasis in single cells. May be involved in the regulation of basolateral Cl(-) exit in NaCl absorbing epithelia. This Rattus norvegicus (Rat) protein is Solute carrier family 12 member 4 (Slc12a4).